Consider the following 1451-residue polypeptide: Transcription elongation factor SPT6 (1451 aa).

Positions 1–12 (MEETGDSKLVPR) are enriched in basic and acidic residues. Positions 1-217 (MEETGDSKLV…EDDETRQRRI (217 aa)) are disordered. Residues 8 to 12 (KLVPR) carry the Nuclear localization signal motif. Acidic residues predominate over residues 29 to 51 (EEEEGEDVFDSSEEDEDIDEDED). The segment covering 76 to 85 (SKKRRKHKRR) has biased composition (basic residues). The Nuclear localization signal motif lies at 77–85 (KKRRKHKRR). Acidic residues predominate over residues 88–100 (EEDDRLSEDDLDL). Ser94 carries the post-translational modification Phosphoserine. The Nuclear localization signal motif lies at 120–125 (KRLKRV). Phosphoserine occurs at positions 134, 136, 148, and 155. Positions 153–162 (FFSEDEEEEE) are enriched in acidic residues. Over residues 180-192 (HENRNRTADKGGI) the composition is skewed to basic and acidic residues. Residues 194-211 (DELDDFIEDDEFSDEDDE) are compositionally biased toward acidic residues. Ser206 and Ser295 each carry phosphoserine. Residues 1257-1354 (PYYFPFNGRQ…RLLNEMTSSE (98 aa)) enclose the SH2 domain.

This sequence belongs to the SPT6 family. Interacts with CTR9.

Its subcellular location is the nucleus. The protein localises to the chromosome. Functionally, histone H3-H4 chaperone that plays a role in maintenance of chromatin structure during RNA polymerase II transcription elongation thereby repressing transcription initiation from cryptic promoters. Mediates the reassembly of nucleosomes onto the promoters of at least a selected set of genes during repression; the nucleosome reassembly is essential for transcriptional repression. Essential for viability. This is Transcription elongation factor SPT6 (SPT6) from Saccharomyces cerevisiae (strain ATCC 204508 / S288c) (Baker's yeast).